A 129-amino-acid polypeptide reads, in one-letter code: Protein UL131A (129 aa).

A signal peptide spans 1 to 18 (MRLCRVWLSVCLCAVVLG).

In terms of assembly, forms the envelope pentamer complex (PC) composed of gH, gL, UL128, UL130, and UL131A. The pentamer interacts with host NRP2. The interaction with gH is important for the formation of UL128, UL130, gH-gL complex.

The protein localises to the virion membrane. Plays a role in viral entry into host cells. Forms a pentameric complex at the surface of the viral envelope together with gH, gL, UL130 and UL131. This complex is required for entry in epithelial, endothelial and myeloid host cells. Mechanistically, engages host receptor(s) including neurophilin 2/NRP2 to mediate infection. Contributes to the formation of the complex between UL128, UL130 and gH-gL. This Human cytomegalovirus (strain Merlin) (HHV-5) protein is Protein UL131A (UL131A).